Here is a 351-residue protein sequence, read N- to C-terminus: Peptide chain release factor 1 (351 aa).

Gln229 carries the N5-methylglutamine modification.

Belongs to the prokaryotic/mitochondrial release factor family. Methylated by PrmC. Methylation increases the termination efficiency of RF1.

It is found in the cytoplasm. Its function is as follows. Peptide chain release factor 1 directs the termination of translation in response to the peptide chain termination codons UAG and UAA. The sequence is that of Peptide chain release factor 1 from Cereibacter sphaeroides (strain ATCC 17023 / DSM 158 / JCM 6121 / CCUG 31486 / LMG 2827 / NBRC 12203 / NCIMB 8253 / ATH 2.4.1.) (Rhodobacter sphaeroides).